We begin with the raw amino-acid sequence, 427 residues long: Mitochondrial distribution and morphology protein 10 (427 aa).

Residues 393-414 (SSYANSQATAGAQGSSGGPPTS) show a composition bias toward low complexity. Residues 393–427 (SSYANSQATAGAQGSSGGPPTSYWRGVGVSVSYSS) are disordered.

Belongs to the MDM10 family. Component of the ER-mitochondria encounter structure (ERMES) or MDM complex, composed of mmm1, mdm10, mdm12 and mdm34. Associates with the mitochondrial outer membrane sorting assembly machinery SAM(core) complex.

The protein localises to the mitochondrion outer membrane. Functionally, component of the ERMES/MDM complex, which serves as a molecular tether to connect the endoplasmic reticulum and mitochondria. Components of this complex are involved in the control of mitochondrial shape and protein biogenesis and may function in phospholipid exchange. mdm10 is involved in the late assembly steps of the general translocase of the mitochondrial outer membrane (TOM complex). Functions in the tom40-specific route of the assembly of outer membrane beta-barrel proteins, including the association of tom40 with the receptor tom22 and small TOM proteins. Can associate with the SAM(core) complex as well as the mdm12-mmm1 complex, both involved in late steps of the major beta-barrel assembly pathway, that is responsible for biogenesis of all outer membrane beta-barrel proteins. May act as a switch that shuttles between both complexes and channels precursor proteins into the tom40-specific pathway. Plays a role in mitochondrial morphology and in the inheritance of mitochondria. This is Mitochondrial distribution and morphology protein 10 (mdmB) from Emericella nidulans (strain FGSC A4 / ATCC 38163 / CBS 112.46 / NRRL 194 / M139) (Aspergillus nidulans).